Here is a 310-residue protein sequence, read N- to C-terminus: MDKENHSVVTEFVFMGITQDPQLQIIFFVVFLLVYLVNVIGNVGMIILIITDSQLHTPMYFFLCNLSFVDLGYSSAIAPRMLADFLTKHKVISFSSCATQFAFFVGFVDAECYVLAAMAYDRFVAICRPLHYSTLMSKKVCLVLMLGSYFAGLVSLVAHTSLTFSLSYCGSNIINHFFCEIPPLLALSCSDTYISEILLFSLCGFIEFSTILIIFISYAFILIAIIRIRSAEGRLKAFSTCGSHLTGVTLFYGTVMFMYLRPTSSYSLDQDKWASVFYTIIIPMLNPLIYSLRNKDVKAAFKKLIGKKPQ.

Residues 1-25 are Extracellular-facing; it reads MDKENHSVVTEFVFMGITQDPQLQI. Asparagine 5 carries an N-linked (GlcNAc...) asparagine glycan. A helical membrane pass occupies residues 26-46; the sequence is IFFVVFLLVYLVNVIGNVGMI. Residues 47–54 are Cytoplasmic-facing; the sequence is ILIITDSQ. The helical transmembrane segment at 55 to 75 threads the bilayer; the sequence is LHTPMYFFLCNLSFVDLGYSS. Residues 76–99 are Extracellular-facing; that stretch reads AIAPRMLADFLTKHKVISFSSCAT. A disulfide bridge links cysteine 97 with cysteine 189. Residues 100 to 120 traverse the membrane as a helical segment; that stretch reads QFAFFVGFVDAECYVLAAMAY. The Cytoplasmic portion of the chain corresponds to 121 to 133; the sequence is DRFVAICRPLHYS. Residues 134–154 form a helical membrane-spanning segment; that stretch reads TLMSKKVCLVLMLGSYFAGLV. Residues 155 to 196 lie on the Extracellular side of the membrane; that stretch reads SLVAHTSLTFSLSYCGSNIINHFFCEIPPLLALSCSDTYISE. Residues 197–217 form a helical membrane-spanning segment; it reads ILLFSLCGFIEFSTILIIFIS. Residue cysteine 203 coordinates Cu cation. The Cytoplasmic segment spans residues 218–237; that stretch reads YAFILIAIIRIRSAEGRLKA. The helical transmembrane segment at 238 to 258 threads the bilayer; that stretch reads FSTCGSHLTGVTLFYGTVMFM. Cu cation is bound by residues methionine 256 and arginine 261. Residues 259–271 are Extracellular-facing; that stretch reads YLRPTSSYSLDQD. Residues 272 to 292 form a helical membrane-spanning segment; the sequence is KWASVFYTIIIPMLNPLIYSL. At 293 to 310 the chain is on the cytoplasmic side; it reads RNKDVKAAFKKLIGKKPQ.

This sequence belongs to the G-protein coupled receptor 1 family.

The protein resides in the cell membrane. Its activity is regulated as follows. Copper binding enhances receptor activity in response to odorant binding. Its function is as follows. Olfactory receptor that is activated by the binding of organosulfur odorants with thioether groups such as (methylthio)methanethiol (MTMT). The activity of this receptor is mediated by G proteins which activate adenylyl cyclase. The protein is Olfactory receptor 5AR1 of Mus musculus (Mouse).